The primary structure comprises 434 residues: CCA tRNA nucleotidyltransferase 1, mitochondrial (434 aa).

A mitochondrion-targeting transit peptide spans 1–41 (MLRCLYHWHRPVLNRRWSRLCLPKQYLFTMKLQSPEFQSLF). Gly-64 and Arg-67 together coordinate ATP. Residues Gly-64 and Arg-67 each contribute to the CTP site. Asp-77 and Asp-79 together coordinate Mg(2+). 5 residues coordinate ATP: Arg-151, Asp-194, Arg-197, Arg-200, and Arg-203. Positions 151, 194, 197, 200, and 203 each coordinate CTP. The residue at position 400 (Ser-400) is a Phosphoserine. Residue Lys-402 is modified to N6-acetyllysine.

It belongs to the tRNA nucleotidyltransferase/poly(A) polymerase family. In terms of assembly, monomer, and homodimer; disulfide-linked. Requires Mg(2+) as cofactor.

It localises to the mitochondrion. The protein localises to the cytoplasm. It is found in the nucleus. The catalysed reaction is a tRNA precursor + 2 CTP + ATP = a tRNA with a 3' CCA end + 3 diphosphate. The enzyme catalyses a tRNA with a 3' CCA end + 2 CTP + ATP = a tRNA with a 3' CCACCA end + 3 diphosphate. In terms of biological role, nucleotidyltransferase that catalyzes the addition and repair of the essential 3'-terminal CCA sequence in tRNAs, which is necessary for the attachment of amino acids to the 3' terminus of tRNA molecules, using CTP and ATP as substrates. tRNA 3'-terminal CCA addition is required both for tRNA processing and repair. Promotes tRNA repair and recycling downstream of the ribosome-associated quality control (RQC) pathway by mediating addition of the tRNA 3'-terminal CCA following cleavage by ANKZF1 and repair by ELAC1. Also involved in tRNA surveillance by mediating tandem CCA addition to generate a CCACCA at the 3' terminus of unstable tRNAs and tRNA-like transcripts. While stable tRNAs receive only 3'-terminal CCA, unstable tRNAs beginning with GG are marked with CCACCA and rapidly degraded. The structural flexibility of RNA controls the choice between CCA versus CCACCA addition: following the first CCA addition cycle, nucleotide-binding to the active site triggers a clockwise screw motion, producing torque on the RNA. This ejects stable RNAs, whereas unstable RNAs are refolded while bound to the enzyme and subjected to a second CCA catalytic cycle. Functionally, adds 2 C residues (CC-) to the 3' terminus of tRNA molecules instead of a complete CCA end as isoform 1 does (in vitro). In Homo sapiens (Human), this protein is CCA tRNA nucleotidyltransferase 1, mitochondrial.